We begin with the raw amino-acid sequence, 8384 residues long: Mucin-19 (8384 aa).

Positions 1–21 (MKLILWYLVVALWCFFKDVEA) are cleaved as a signal peptide. 4 disordered regions span residues 33 to 197 (AASR…YGAG), 222 to 247 (SKAD…PDAG), 279 to 305 (GDTG…IDLG), and 332 to 467 (QEGF…PEAT). Composition is skewed to low complexity over residues 35 to 48 (SRSG…SSSG) and 88 to 98 (GGFFNSSSSSG). Positions 169 to 184 (DKSRERWDAGNSRSED) are enriched in basic and acidic residues. Polar residues predominate over residues 187-197 (ADSTNTRYGAG). Residues 279 to 299 (GDTGISSKTVEGNQTSSSGGS) show a composition bias toward polar residues. Residues 359-369 (GSDSSSSGDSS) are compositionally biased toward low complexity. Over residues 370 to 381 (ARNGFENSSGIS) the composition is skewed to polar residues. 2 stretches are compositionally biased toward low complexity: residues 424–435 (SDSGGNTWSSDS) and 443–452 (TSSSEYSTSG). 3 VWFD domains span residues 478-649 (GEIS…QHCN), 815-995 (GRCK…SSCI), and 1274-1447 (TICH…QECS). Disulfide bonds link C502–C648, C817–C952, C838–C994, C857–C865, C1276–C1411, C1298–C1446, C1307–C1408, and C1323–C1330. Disordered regions lie at residues 1680 to 1699 (TSSS…PFTT), 1732 to 2464 (AGTT…KSPG), 2484 to 2526 (LESE…TEGS), 2540 to 2827 (RPLD…MTGT), 2850 to 2917 (STVG…LGTI), 2984 to 3027 (VTTG…SGTT), 3075 to 3368 (GTTG…GKTG), 3386 to 3428 (TTRL…GKTG), 3585 to 3628 (ETTG…TNGL), 3667 to 3736 (GSSA…TGLP), 4105 to 4147 (TGSS…NGLS), 4187 to 4251 (SAGV…AEVT), 4315 to 4390 (GLSA…SARV), 4414 to 4455 (TGSS…TNGQ), 4510 to 4583 (TGTT…TGLP), 4790 to 4843 (TGTT…TGLP), 4895 to 4930 (SSAG…AGVT), 5130 to 5161 (TGTT…GVTG), 5429 to 5452 (VTGT…VTGK), 5464 to 5494 (GPSA…GTTG), 5880 to 5918 (GTSI…SAEM), 6069 to 6403 (TGKT…STES), 6440 to 6918 (GRAT…ETTK), 6953 to 7223 (GTSE…TGFK), 7250 to 7749 (SFST…SKTG), 7783 to 7975 (KNGS…EAGS), and 8020 to 8133 (SGRS…VSQP). Composition is skewed to low complexity over residues 1732 to 1746 (AGTT…TGAA), 1772 to 1813 (PGEA…TTGP), and 1820 to 1833 (GATS…EGMS). Positions 1835 to 1860 (VTGQSLGSTAGSDSEITAKTSFTGSS) are enriched in polar residues. Low complexity predominate over residues 1868-1879 (PSPGSPGHFSGG). Residues 1880 to 1905 (TTEWGNVATTGAAGENTSGALGSTEG) are compositionally biased toward polar residues. The segment covering 1909–1921 (ATTSAGSGNTAGT) has biased composition (low complexity). Polar residues predominate over residues 1950–1968 (GSSTPGEADIGNTSFGKSG). Low complexity-rich tracts occupy residues 1969 to 1983 (TPTV…SPVS) and 2013 to 2049 (GGKI…SGPS). Residues 2055-2100 (NYGQSSEIPGTIKSSSDVSGTMGQSDTTSGPSVAVTRTSEQSSGVT) are compositionally biased toward polar residues. Composition is skewed to low complexity over residues 2132–2147 (TTGS…GPSS) and 2159–2170 (GSGTSGQSVTGS). 2 stretches are compositionally biased toward polar residues: residues 2171-2186 (RATG…TVSF) and 2209-2225 (GSGT…TTRL). 2 stretches are compositionally biased toward low complexity: residues 2233–2246 (TESS…TTPS) and 2280–2313 (SGPS…TKPS). The approximate repeats of G-V-T-G-T-T-G-P-S-A stretch occupies residues 2238 to 6086 (GVTGTTTPSA…GVTGTTGLSA (3849 aa)). 2 stretches are compositionally biased toward polar residues: residues 2316 to 2332 (RTGT…TTEP) and 2354 to 2372 (ATES…TTIP). Residues 2403 to 2419 (SSGGSGATRSSGGGMGT) are compositionally biased toward gly residues. The span at 2420-2441 (TGQSTARSETTGPLFGLTGTFG) shows a compositional bias: low complexity. The span at 2442–2460 (QSATVTGTSSNSAGVTTPE) shows a compositional bias: polar residues. Composition is skewed to low complexity over residues 2512 to 2526 (SAGE…TEGS), 2545 to 2571 (GSGT…TTRK), and 2578 to 2589 (TTGLSGLTGTSG). Polar residues-rich tracts occupy residues 2595–2610 (TGTS…TSEK) and 2638–2653 (TRPS…QSAR). Residues 2654 to 2681 (VTETVGASAGVTGTTGPSTEGSGATGPS) are compositionally biased toward low complexity. Composition is skewed to polar residues over residues 2695-2748 (SGTT…TGTT) and 2755-2770 (TETT…TTGP). Low complexity predominate over residues 2787 to 2799 (ATRSSGGETETTG). Polar residues-rich tracts occupy residues 2800 to 2827 (QSAV…MTGT), 2850 to 2859 (STVGLETTRP), and 2874 to 2892 (AQTT…QSAR). A compositionally biased stretch (low complexity) spans 2894 to 2910 (TGASGPSVGVTGTTGPA). A compositionally biased stretch (polar residues) spans 2984–2998 (VTTGPSVTGVETTAK). Over residues 2999–3027 (TTSGGLSTTISSVGGTGTTGQSPERSGTT) the composition is skewed to low complexity. A compositionally biased stretch (polar residues) spans 3099-3109 (PSITGSGTTRP). Residues 3114-3130 (SWTAGTSSGGHSTTSPS) show a composition bias toward low complexity. Over residues 3131-3159 (VRGTETTGQSAAESVTTGPVTGYTETSGP) the composition is skewed to polar residues. Residues 3172–3188 (TVTQTTGSSAAVSGTTV) are compositionally biased toward low complexity. A compositionally biased stretch (polar residues) spans 3189 to 3224 (QSLTVSGTTRPSSGQTEITGSSVKESGTTESSAVRS). Positions 3225–3277 (GTTGPTAGVTGTNGPSSAGVTGITGSSPGVTGTTGSSPGVTGTTGSSARSGTS) are enriched in low complexity. 2 stretches are compositionally biased toward polar residues: residues 3303–3317 (ITGT…TGTT) and 3324–3362 (TGTT…SSAG). Residues 3390–3417 (SAGVTGTTGPSPGVTGTTGTPAGVTGTT) show a composition bias toward low complexity. Composition is skewed to polar residues over residues 3702-3728 (VTGT…TTGP) and 4105-4116 (TGSSARSGTSIP). The span at 4117–4126 (SVGETGTTRT) shows a compositional bias: low complexity. The segment covering 4320–4346 (VTGTTRPSAGVTGTTGQSAEVTGTTEP) has biased composition (polar residues). 2 stretches are compositionally biased toward low complexity: residues 4347–4385 (SAGL…GTTG) and 4414–4426 (TGSS…STPS). Composition is skewed to low complexity over residues 5469–5494 (VTGT…GTTG) and 5889–5903 (TGTT…TTTG). Polar residues-rich tracts occupy residues 5908–5918 (ITGTNGLSAEM), 6071–6103 (KTRS…TTKT), and 6111–6121 (TRPSAGITATT). Over residues 6156-6168 (TTTGTTGVTTGTT) the composition is skewed to low complexity. Polar residues-rich tracts occupy residues 6217–6248 (EVST…TATT) and 6257–6275 (APGS…SAST). Low complexity predominate over residues 6284–6295 (TGSTRGVRTTGS). 2 stretches are compositionally biased toward polar residues: residues 6303-6323 (GEFS…TTLT) and 6336-6346 (ESTTSLPQSAK). The segment covering 6378–6389 (SGTTISSGGSHT) has biased composition (low complexity). Composition is skewed to polar residues over residues 6440 to 6457 (GRAT…TSQA) and 6470 to 6503 (TTIT…TTYI). Residues 6507–6523 (GTTRGGLATATTGAFSG) show a composition bias toward low complexity. The span at 6560 to 6571 (TTFTSGGSHTEA) shows a compositional bias: polar residues. A compositionally biased stretch (low complexity) spans 6581-6597 (TGTESRAATTRAAPGTT). Residues 6599-6608 (VPGSSNTGAT) show a composition bias toward polar residues. Over residues 6612–6628 (GGSATTRGRITTATTGA) the composition is skewed to low complexity. 2 stretches are compositionally biased toward polar residues: residues 6669–6680 (RITSGGSYTATT) and 6689–6698 (APGSSNTGAT). The segment covering 6707 to 6718 (TRGRITTATTGA) has biased composition (low complexity). Residues 6752 to 6766 (TTLTGDRSSTGSESR) show a composition bias toward polar residues. Residues 6767–6781 (TATTGVAPGTTVAPG) show a composition bias toward low complexity. Positions 6794-6817 (SGTTNIGRATGATTSIVGSDTSQA) are enriched in polar residues. A compositionally biased stretch (low complexity) spans 6827–6842 (SPGASSTSQSSRPGTS). The segment covering 6843 to 6875 (VTPDSSASESETVTTKEFSGTTAISRTSHTGTP) has biased composition (polar residues). The span at 6887-6901 (TATTGVAPGTTVAPG) shows a compositional bias: low complexity. Polar residues-rich tracts occupy residues 6902-6911 (SSNTEATTSV) and 6953-6964 (GTSEVAPSTTVA). Over residues 6966–6994 (GSFSTAATTSPGASGTTGVTTTTKTTTSL) the composition is skewed to low complexity. The segment covering 7006–7041 (SATTGAPGSRTGTAGVPSATTVSPGSSNSEATTSVG) has biased composition (polar residues). Residues 7045-7074 (KTGAETITEATTSTEGTGTSGTGFKTGTSE) show a composition bias toward low complexity. The span at 7085 to 7094 (SFSTAATTSP) shows a compositional bias: polar residues. The segment covering 7095–7112 (GASGMTGVTTTTKTTTSL) has biased composition (low complexity). Residues 7143-7158 (TRVTPGSSNSEATTSV) are compositionally biased toward polar residues. Low complexity-rich tracts occupy residues 7201–7215 (SGSS…TEGT) and 7250–7276 (SFST…TTSL). A compositionally biased stretch (polar residues) spans 7293–7311 (SGTTVAPGSSNSEATTSVG). Residues 7379-7397 (TTSTKGTGTSGTGFKTGTS) are compositionally biased toward low complexity. The segment covering 7403 to 7421 (TTVSPGSFSTATISPGASR) has biased composition (polar residues). Over residues 7422–7435 (TTGAAPAAETTTSL) the composition is skewed to low complexity. The segment covering 7465 to 7483 (SATTIAPGSSNSEATTSLG) has biased composition (polar residues). Residues 7525–7537 (PLGGASGTSGGYV) are compositionally biased toward gly residues. 2 stretches are compositionally biased toward polar residues: residues 7544 to 7557 (PTTS…SRTI) and 7571 to 7596 (AGTS…TSPG). Over residues 7600-7613 (MTGVRTTSKTTTSL) the composition is skewed to low complexity. 2 stretches are compositionally biased toward polar residues: residues 7642–7669 (SSRT…SGTG) and 7698–7708 (SFSTAATTSPG). The segment covering 7715–7732 (TGPTAETTTFLGGSSTTG) has biased composition (low complexity). Positions 7783 to 7811 (KNGSMTTALGSQLSSSQTVIPGSSGTISH) are enriched in polar residues. Residues 7812-7828 (TTVAPGSSVTGTTTGAS) show a composition bias toward low complexity. Residues 7830–7851 (DQVTGSKTGTTGVALSTTVAPG) show a composition bias toward polar residues. Residues 7852–7861 (SSSTEATTST) are compositionally biased toward low complexity. The segment covering 7862-7891 (GVHRTTVVGQKTGATTRGSAKQGTRSTIEA) has biased composition (polar residues). Low complexity predominate over residues 7892-7917 (TTSFRGTGTTGSGMNTGTTGVVSGNT). The span at 7918–7934 (ISPSSFNTEATSGTSER) shows a compositional bias: polar residues. The span at 7938-7952 (GSEIGTTGIVSGTTV) shows a compositional bias: low complexity. Polar residues-rich tracts occupy residues 7953–7965 (APGS…TTSL), 8020–8040 (SGRS…SGTT), 8048–8081 (TGNT…SISG), and 8110–8120 (ETGVQTGSTLV). In terms of domain architecture, VWFC spans 8159-8225 (PVCHGPLGEE…DTCCEIGYCE (67 aa)). Intrachain disulfides connect C8288/C8339, C8306/C8353, C8315/C8369, and C8319/C8371. Residues 8288–8376 (CKNNCRSSLV…TTCSCLDICQ (89 aa)) form the CTCK domain.

In terms of tissue distribution, expressed corneal epithelial cells, conjunctival goblet and epithelial cells and lacrimal gland cells (at protein level). Expressed by mucous cells of the submandibular gland and submucosal gland of the trachea. Expressed by middle ear epithelial cells.

The protein localises to the secreted. May function in ocular mucus homeostasis. The protein is Mucin-19 (MUC19) of Homo sapiens (Human).